The following is a 487-amino-acid chain: Protein SMG9 (487 aa).

2 disordered regions span residues 30–83 and 136–164; these read EDAA…PPAL and RDKGSCSGGAGTAGTSAGAPNALQELQPP. Residues 42-70 show a composition bias toward basic and acidic residues; sequence LKKDRDREQETWDRERDKDRKLERDREAE.

This sequence belongs to the SMG9 family.

Functionally, involved in nonsense-mediated decay (NMD) of mRNAs containing premature stop codons. Probable component of kinase complex containing nonC and recruited to stalled ribosomes. This Drosophila melanogaster (Fruit fly) protein is Protein SMG9.